Consider the following 71-residue polypeptide: Large ribosomal subunit protein bL31 (71 aa).

Cys16, Cys18, Cys37, and Cys40 together coordinate Zn(2+).

This sequence belongs to the bacterial ribosomal protein bL31 family. Type A subfamily. Part of the 50S ribosomal subunit. Zn(2+) is required as a cofactor.

Functionally, binds the 23S rRNA. This chain is Large ribosomal subunit protein bL31, found in Pseudomonas aeruginosa (strain LESB58).